The primary structure comprises 43 residues: Large ribosomal subunit protein uL11 (43 aa).

The protein belongs to the universal ribosomal protein uL11 family. As to quaternary structure, part of the ribosomal stalk of the 50S ribosomal subunit. Interacts with L10 and the large rRNA to form the base of the stalk. L10 forms an elongated spine to which L12 dimers bind in a sequential fashion forming a multimeric L10(L12)X complex. Post-translationally, one or more lysine residues are methylated.

Its function is as follows. Forms part of the ribosomal stalk which helps the ribosome interact with GTP-bound translation factors. The chain is Large ribosomal subunit protein uL11 (rplK) from Streptomyces galbus.